The sequence spans 131 residues: Small ribosomal subunit protein uS11 (131 aa).

Belongs to the universal ribosomal protein uS11 family. Part of the 30S ribosomal subunit. Interacts with proteins S7 and S18. Binds to IF-3.

Functionally, located on the platform of the 30S subunit, it bridges several disparate RNA helices of the 16S rRNA. Forms part of the Shine-Dalgarno cleft in the 70S ribosome. This Dictyoglomus turgidum (strain DSM 6724 / Z-1310) protein is Small ribosomal subunit protein uS11.